We begin with the raw amino-acid sequence, 436 residues long: Serine--tRNA ligase (436 aa).

L-serine is bound at residue 239 to 241 (TAE). 270–272 (RKE) is an ATP binding site. Glu-293 is an L-serine binding site. An ATP-binding site is contributed by 357-360 (EISS). Ser-392 contributes to the L-serine binding site.

The protein belongs to the class-II aminoacyl-tRNA synthetase family. Type-1 seryl-tRNA synthetase subfamily. In terms of assembly, homodimer. The tRNA molecule binds across the dimer.

Its subcellular location is the cytoplasm. It catalyses the reaction tRNA(Ser) + L-serine + ATP = L-seryl-tRNA(Ser) + AMP + diphosphate + H(+). The enzyme catalyses tRNA(Sec) + L-serine + ATP = L-seryl-tRNA(Sec) + AMP + diphosphate + H(+). It participates in aminoacyl-tRNA biosynthesis; selenocysteinyl-tRNA(Sec) biosynthesis; L-seryl-tRNA(Sec) from L-serine and tRNA(Sec): step 1/1. Its function is as follows. Catalyzes the attachment of serine to tRNA(Ser). Is also able to aminoacylate tRNA(Sec) with serine, to form the misacylated tRNA L-seryl-tRNA(Sec), which will be further converted into selenocysteinyl-tRNA(Sec). This Leuconostoc citreum (strain KM20) protein is Serine--tRNA ligase.